Here is a 112-residue protein sequence, read N- to C-terminus: uncharacterized protein (112 aa).

The next 2 helical transmembrane spans lie at 7–26 (PSFH…TLDY) and 36–58 (TYMH…FFLY).

The protein localises to the membrane. This is an uncharacterized protein from Saccharomyces cerevisiae (strain ATCC 204508 / S288c) (Baker's yeast).